The following is a 790-amino-acid chain: Mitochondrial intermediate peptidase (790 aa).

Residues 1–29 constitute a mitochondrion transit peptide; the sequence is MLKRLARNNSSPWICSRCLQQSQRQRRFN. His570 provides a ligand contact to Zn(2+). Glu571 is a catalytic residue. The Zn(2+) site is built by His574 and His577.

It belongs to the peptidase M3 family. Zn(2+) is required as a cofactor.

The protein resides in the mitochondrion matrix. The catalysed reaction is Release of an N-terminal octapeptide as second stage of processing of some proteins imported into the mitochondrion.. In terms of biological role, cleaves proteins, imported into the mitochondrion, to their mature size. While most mitochondrial precursor proteins are processed to the mature form in one step by mitochondrial processing peptidase (MPP), the sequential cleavage by MIP of an octapeptide after initial processing by MPP is a required step for a subgroup of nuclear-encoded precursor proteins destined for the matrix or the inner membrane. The polypeptide is Mitochondrial intermediate peptidase (OCT1) (Phaeosphaeria nodorum (strain SN15 / ATCC MYA-4574 / FGSC 10173) (Glume blotch fungus)).